The following is a 959-amino-acid chain: Atromentin synthetase invA1 (959 aa).

Residues 59 to 466 (DSSIQTKTFS…SGRIKETVIV (408 aa)) form an adenylation (A) domain region. Residues 598-676 (TPQTETEQTL…SLANYIVALK (79 aa)) form the Carrier domain. Residues 603–673 (TEQTLAAIYA…VVSSLANYIV (71 aa)) are thiolation and peptide carrier (T) domain. Serine 635 bears the O-(pantetheine 4'-phosphoryl)serine mark. The segment at 699–946 (PIFMVHPGVG…LMDFDHVPGF (248 aa)) is thioesterase (TE) domain.

The protein belongs to the ATP-dependent AMP-binding enzyme family.

Its pathway is secondary metabolite biosynthesis. An L-tyrosine:2-oxoglutarate aminotransferase (probably invD) and atromentin synthetase invA1 catalyze consecutive steps to turn over L-tyrosine into atromentin, which represents the generic precursor molecule for the entire terphenylquinone and pulvinic acid family of pigments, which are widely distributed secondary metabolites in homobasidiomycetes. The first step catalyzed by the aminotransferase converts L-tyrosine in to 4-hydroxyphenylpyruvate (4-HPP). Adenylation of two 4-HPP monomers by the invA1 adenylation (A) domain, covalent tethering of the monomers as a thioester and oxoester onto the invA1 thiolation (T) and thioesterase (TE) domains, respectively, and symmetric C-C-bond formation between two monomers catalyzed by the invA1 TE domain leads to atromentin. This is Atromentin synthetase invA1 (invA1) from Paxillus involutus (Naked brimcap).